Consider the following 936-residue polypeptide: Myocardin-related transcription factor A (936 aa).

RPEL repeat units follow at residues 15 to 40, 59 to 84, and 103 to 128; these read TVLQLKLQQRRTREELENQGIMPPLK, DYLKRKIRSRPERAELVRMHILEETS, and DDLNEKISQRPGPMELVVKNILPVET. The Bipartite Nuclear localization signal signature appears at 62–100; the sequence is KRKIRSRPERAELVRMHILEETSAEPSLQAKQIKLKRAR. 3 disordered regions span residues 146–185, 234–258, and 401–422; these read SSFDEDSSDALSPEQPASQESQGSIPSPIENRPSETTQIP, SQPKPSFEKSQRIKKPKEPKPKVKK, and SQDPSTATAASAKPTPVQQAKP. A compositionally biased stretch (polar residues) spans 160–170; it reads QPASQESQGSI. Basic and acidic residues predominate over residues 239–254; sequence SFEKSQRIKKPKEPKP. In terms of domain architecture, SAP spans 368–402; the sequence is LDEMKVAELKLELKHRGLPVSGTKIDLIERLKASQ. Low complexity predominate over residues 404 to 416; the sequence is PSTATAASAKPTP. Positions 497–542 form a coiled coil; sequence DARDKDLMLREKDRQIEELTQRLKQKQELVERLRQQLEQEKRTPQH. The disordered stretch occupies residues 707 to 755; that stretch reads HNESPATPPQQPEPEPPPHSIFLTHSSPQWSKNPPGYDEAMKQQPNSCE. Pro residues predominate over residues 712–725; that stretch reads ATPPQQPEPEPPPH. Polar residues predominate over residues 729–738; that stretch reads LTHSSPQWSK.

In terms of assembly, interacts with srf, forming the srf-mrtfa nuclear complex which binds the 5'-CArG-3' consensus motif (CArG box) on DNA via srf. Interacts (via RPEL repeats) with globular actin (G-actin), thereby regulating its subcellular location and activity of the complex formed with srf.

It is found in the cytoplasm. Its subcellular location is the nucleus. In terms of biological role, transcription coactivator that associates with the serum response factor (srf) transcription factor to control expression of genes regulating the cytoskeleton during development, morphogenesis and cell migration. The srf-mrtfa complex activity responds to Rho GTPase-induced changes in cellular globular actin (G-actin) concentration, thereby coupling cytoskeletal gene expression to cytoskeletal dynamics. Mrtfa binds G-actin via its RPEL repeats, regulating activity of the mrtfa-srf complex. Activity is also regulated by filamentous actin (F-actin) in the nucleus. The protein is Myocardin-related transcription factor A (mrtfa) of Xenopus laevis (African clawed frog).